Reading from the N-terminus, the 346-residue chain is NADH-ubiquinone oxidoreductase chain 2 (346 aa).

Transmembrane regions (helical) follow at residues 25 to 45, 52 to 72, 95 to 115, 124 to 144, 149 to 169, 178 to 198, 200 to 220, 242 to 262, 274 to 294, and 326 to 346; these read HWIL…PLIS, AIEA…LILF, CLML…HFWF, LITA…LLLL, LNTT…GWMG, ILAF…SYNP, LTIL…LSLA, ATVM…GFMP, EMTP…FFYL, and AILT…ITML.

Belongs to the complex I subunit 2 family. As to quaternary structure, core subunit of respiratory chain NADH dehydrogenase (Complex I) which is composed of 45 different subunits.

Its subcellular location is the mitochondrion inner membrane. It catalyses the reaction a ubiquinone + NADH + 5 H(+)(in) = a ubiquinol + NAD(+) + 4 H(+)(out). Functionally, core subunit of the mitochondrial membrane respiratory chain NADH dehydrogenase (Complex I) which catalyzes electron transfer from NADH through the respiratory chain, using ubiquinone as an electron acceptor. Essential for the catalytic activity and assembly of complex I. In Gallus gallus (Chicken), this protein is NADH-ubiquinone oxidoreductase chain 2 (MT-ND2).